Here is a 94-residue protein sequence, read N- to C-terminus: MKNQEESGWQAFLTLCSKMQKEKFLQDLFSLFLSFSERKDVASRYHIIRALLEGELTQREIAEKYGVSIAQITRGSNALKGLDPQFKEFLQKEI.

A DNA-binding region spans residues 58–81 (QREIAEKYGVSIAQITRGSNALKG).

This sequence belongs to the TrpR family. As to quaternary structure, homodimer.

Its subcellular location is the cytoplasm. Its function is as follows. This protein is an aporepressor. When complexed with L-tryptophan it binds the operator region of the trp operon and prevents the initiation of transcription. The chain is Trp operon repressor homolog from Chlamydia trachomatis serovar A (strain ATCC VR-571B / DSM 19440 / HAR-13).